A 428-amino-acid chain; its full sequence is Adenylosuccinate synthetase (428 aa).

Residues 12-18 (GDEGKGK) and 40-42 (GHT) contribute to the GTP site. The active-site Proton acceptor is Asp13. Positions 13 and 40 each coordinate Mg(2+). Residues 13–16 (DEGK), 38–41 (NAGH), Thr128, Arg142, Gln223, Thr238, and Arg302 each bind IMP. His41 serves as the catalytic Proton donor. Substrate is bound at residue 298 to 304 (TTTGRPR). Residues Arg304, 330-332 (SID), and 412-414 (SVG) each bind GTP.

The protein belongs to the adenylosuccinate synthetase family. As to quaternary structure, homodimer. Mg(2+) is required as a cofactor.

It is found in the cytoplasm. It carries out the reaction IMP + L-aspartate + GTP = N(6)-(1,2-dicarboxyethyl)-AMP + GDP + phosphate + 2 H(+). It participates in purine metabolism; AMP biosynthesis via de novo pathway; AMP from IMP: step 1/2. Plays an important role in the de novo pathway of purine nucleotide biosynthesis. Catalyzes the first committed step in the biosynthesis of AMP from IMP. This chain is Adenylosuccinate synthetase, found in Geobacillus sp. (strain WCH70).